A 212-amino-acid chain; its full sequence is MAEKEQIKLVLVGDGGVGKTTFVQRHLTGEFEPRYIPTLGVSVHPLIFYTNFGKIHFNVWDTAGQEKFGGLRDGYYIQGNCAIIMFDVTSRISYKNVPNWHSDLTRVCENIPIVLCGNKVDVKDRKVKPSQIVFHRRYNLSYYDVSAKSNYNFEKPFVWLTSKLLGNKAVTLVQQPTLKLPETVLDSNLMSLYEKEVADAAALPLPEDNDDL.

Residues E3–N167 enclose the Small GTPase Ran-type domain. D14–T21 lines the GTP pocket. A switch-I region spans residues P33–V41. GTP-binding positions include G64, N118–D121, and S146–K148. The segment at G64–N80 is switch-II.

This sequence belongs to the small GTPase superfamily. Ran family. As to quaternary structure, found in a nuclear export complex with RanGTP, exportin and pre-miRNA.

The protein localises to the nucleus. Functionally, GTP-binding protein involved in nucleocytoplasmic transport. Required for the import of protein into the nucleus and also for RNA export. Involved in chromatin condensation and control of cell cycle. In Dictyostelium discoideum (Social amoeba), this protein is GTP-binding nuclear protein Ran (ranA).